We begin with the raw amino-acid sequence, 1197 residues long: Transient receptor potential cation channel subfamily A member 1 (1197 aa).

The Cytoplasmic portion of the chain corresponds to 1–753 (MTSGDKETPK…KWNSYGKYFH (753 aa)). ANK repeat units lie at residues 89 to 118 (KGRTAAHQAAARNRVNILRYIRDQNGDFNA), 122 to 151 (AGNTPLHIAVESDAYDALDYLLSIPVDTGV), 155 to 184 (KKQAPVHLATELNKVKSLRVMGQYRNVIDI), 190 to 219 (HGRTALHLAAIYDHEECARILITEFDACPR), 224 to 253 (NGYYPIHEAAKNASSKTMEVFFQWGEQRGC), 265 to 294 (EGNVPLHSAVHGGDIKAVELCLKSGAKIST), 298 to 327 (DLSTPVHLACAQGAIDIVKLMFEMQPMEKR), 336 to 365 (QKMTPLHCASMFDHPDIVSYLVAEGADINA), 369 to 398 (EHRSPLLLAASRSGWKTVHLLIRLGACISV), 443 to 472 (MGCSPLHYASRDGHIRSLENLIRLGACINL), 476 to 505 (NNESPLHFAARYGRYNTVRQLLDSEKGSFI), 512 to 541 (AGMTPLHISSQQGHTRVVQLLLNRGALLHR), 544 to 574 (TGRNPLQLAAMSGYTETIELLHSVHSHLLDQ), and 578 to 607 (DGNTALHLATMENKPHAISVLMSMGCKLVY). Residues 754–774 (LANLLIYSIFLVFVTIYSSLM) form a helical membrane-spanning segment. Residues 775-827 (MNNIELKAGDNKTMSQYCNMGWEQLTMNLSQNPSVASQIRLDSCEERINRTTA) lie on the Extracellular side of the membrane. N-linked (GlcNAc...) asparagine glycans are attached at residues Asn785, Asn802, and Asn823. A helical transmembrane segment spans residues 828-848 (ILFCAVVIVVYILLNSMRELI). Over 849-856 (QIYQQKLH) the chain is Cytoplasmic. Residues 857–877 (YILETVNLISWVLYISALVMV) traverse the membrane as a helical segment. At 878–889 (TPAFQPDGGINT) the chain is on the extracellular side. The chain crosses the membrane as a helical span at residues 890-910 (IHYSAASIAVFLSWFRLLLFL). Residues 911 to 932 (QRFDQVGIYVVMFLEILQTLIK) are Cytoplasmic-facing. A helical transmembrane segment spans residues 933 to 953 (VLMVFSILIIAFGLAFYILLS). The Extracellular segment spans residues 954–968 (KIIDPQPNHLSFSNI). The pore-forming intramembrane region spans 969 to 989 (PMSLLRTFSMMLGELDFVGTY). The Extracellular segment spans residues 990–1004 (VNTYYRDQLKVPMTS). The chain crosses the membrane as a helical span at residues 1005–1025 (FLILSVFMILMPILLMNLLIG). Topologically, residues 1026–1197 (LAVGDIESVR…RAALSFNKSM (172 aa)) are cytoplasmic.

The protein belongs to the transient receptor (TC 1.A.4) family. As to quaternary structure, homotetramer.

The protein resides in the cell membrane. Its function is as follows. Essential for thermotaxis by sensing environmental temperature. Receptor-activated non-selective cation channel involved in detection of sensations such as temperature. Involved in heat nociception by being activated by warm temperature of about 24-29 degrees Celsius. The protein is Transient receptor potential cation channel subfamily A member 1 (TrpA1) of Drosophila melanogaster (Fruit fly).